A 429-amino-acid polypeptide reads, in one-letter code: Cytochrome bc1 complex Rieske iron-sulfur subunit (429 aa).

The tract at residues 1-45 (MSRADDDAVGVPPTCGGRSDEEERRIVPGPNPQDGAKDGAKATAV) is disordered. Transmembrane regions (helical) follow at residues 96 to 116 (VAVW…IFLF), 137 to 157 (PLYG…AVLY), and 207 to 227 (FGVG…GGLI). Residues 316 to 410 (RNPVMLIRIK…ITIDTDGYLV (95 aa)) form the Rieske domain. [2Fe-2S] cluster contacts are provided by Cys-353, His-355, Cys-372, and His-375. Residues Cys-358 and Cys-374 are joined by a disulfide bond.

This sequence belongs to the Rieske iron-sulfur protein family. The cytochrome bc1 complex is composed of a cytochrome b (QcrB), the Rieske iron-sulfur protein (QcrA) and a diheme cytochrome c (QcrC) subunit. [2Fe-2S] cluster serves as cofactor.

It is found in the cell membrane. In terms of biological role, iron-sulfur subunit of the cytochrome bc1 complex, an essential component of the respiratory electron transport chain required for ATP synthesis. The bc1 complex catalyzes the oxidation of menaquinol and the reduction of cytochrome c in the respiratory chain. The bc1 complex operates through a Q-cycle mechanism that couples electron transfer to generation of the proton gradient that drives ATP synthesis. This Mycobacterium bovis (strain ATCC BAA-935 / AF2122/97) protein is Cytochrome bc1 complex Rieske iron-sulfur subunit (qcrA).